An 86-amino-acid chain; its full sequence is Putative pro-MCH-like protein 1 (86 aa).

The segment at 31-49 is NGE-like; it reads GSVAFPAENGVQDTESTQE. Positions 38–62 are disordered; sequence ENGVQDTESTQEKRETGDEENSAKF. Residues 52 to 64 are NEI-like; sequence ETGDEENSAKFPV. The segment at 68-86 is melanin-concentrating hormone-like; sequence DFDTLSCMLGRVYQSCWQV.

It belongs to the melanin-concentrating hormone family. As to expression, expressed in testis and brain.

This Homo sapiens (Human) protein is Putative pro-MCH-like protein 1 (PMCHL1).